The following is a 110-amino-acid chain: UPF0122 protein LMOf2365_1829 (110 aa).

This sequence belongs to the UPF0122 family.

Might take part in the signal recognition particle (SRP) pathway. This is inferred from the conservation of its genetic proximity to ftsY/ffh. May be a regulatory protein. This is UPF0122 protein LMOf2365_1829 from Listeria monocytogenes serotype 4b (strain F2365).